Here is a 383-residue protein sequence, read N- to C-terminus: Acetylornithine deacetylase (383 aa).

Residue histidine 80 participates in Zn(2+) binding. Aspartate 82 is a catalytic residue. Aspartate 112 lines the Zn(2+) pocket. Residue glutamate 144 is part of the active site. Positions 145, 169, and 355 each coordinate Zn(2+).

The protein belongs to the peptidase M20A family. ArgE subfamily. Homodimer. Zn(2+) is required as a cofactor. It depends on Co(2+) as a cofactor. Requires glutathione as cofactor.

The protein localises to the cytoplasm. It catalyses the reaction N(2)-acetyl-L-ornithine + H2O = L-ornithine + acetate. Its pathway is amino-acid biosynthesis; L-arginine biosynthesis; L-ornithine from N(2)-acetyl-L-ornithine (linear): step 1/1. In terms of biological role, catalyzes the hydrolysis of the amide bond of N(2)-acetylated L-amino acids. Cleaves the acetyl group from N-acetyl-L-ornithine to form L-ornithine, an intermediate in L-arginine biosynthesis pathway, and a branchpoint in the synthesis of polyamines. The polypeptide is Acetylornithine deacetylase (Salmonella heidelberg (strain SL476)).